We begin with the raw amino-acid sequence, 488 residues long: Annexin A7 (488 aa).

Positions 1-18 (MSYPGYPPTGYPPFPGYP) are enriched in pro residues. Disordered regions lie at residues 1–49 (MSYP…YPQV) and 71–150 (GYPG…NTES). The segment at 1-143 (MSYPGYPPTG…QYPGGQPTYP (143 aa)) is repeat-rich region. Residues 5 to 20 (GYPPTGYPPFPGYPPA) form a 3 X 5 AA tandem repeats of G-Y-P-P-X region. Residues 89–102 (PGQGFGVPPGGAGF) show a composition bias toward gly residues. Annexin repeat units follow at residues 185–256 (FDAM…ALFM), 257–328 (PPTY…SMCQ), 340–412 (QMAQ…TILQ), and 416–487 (NRPA…AIVG). Position 233 is an N6-acetyllysine (lysine 233).

This sequence belongs to the annexin family. In terms of assembly, interacts with PDCD6.

Functionally, calcium/phospholipid-binding protein which promotes membrane fusion and is involved in exocytosis. The chain is Annexin A7 (ANXA7) from Macaca fascicularis (Crab-eating macaque).